The chain runs to 501 residues: Cytochrome P450 71B3 (501 aa).

Residues 2–22 (SILLYFFFLPVILSLIFMKKF) traverse the membrane as a helical segment. Residue Cys-445 participates in heme binding.

The protein belongs to the cytochrome P450 family. Requires heme as cofactor.

The protein localises to the membrane. The protein is Cytochrome P450 71B3 (CYP71B3) of Arabidopsis thaliana (Mouse-ear cress).